Consider the following 218-residue polypeptide: MAEETDTRPASAGSRGRPAPEDDDREEGEITDLACAPSPPATHPLEHSWTFWFDNPQSKSKQAAWGSSIRPIHTFSTVEEFWGLYNNINHPSKLIVGADFHCFKNKIEPKWEDPICANGGKWTISCGRGKSDTFWLHTLLAMIGEQFDYGDEICGAVVSVRGKQERIAIWTKNAANEAAQVSIGKQWKELLDYKDSIGFIVHDDAKKMDKGLKNRYTV.

Residues M1–P39 form a disordered region. The span at E21–I30 shows a compositional bias: acidic residues. EIF4G-binding regions lie at residues H43 to E46 and F53 to N89. MRNA-binding positions include K61–G66, K93, and W111–E112. C116 and C154 are disulfide-bonded. Residues H137–Q146 are EIF4G-binding. Residues R161 to R166 and K206 to K210 each bind mRNA.

This sequence belongs to the eukaryotic initiation factor 4E family. As to quaternary structure, EIF4F is a multi-subunit complex, the composition of which varies with external and internal environmental conditions. It is composed of at least EIF4A, EIF4E and EIF4G. EIF4E is also known to interact with other partners. In higher plants two isoforms of EIF4F have been identified, named isoform EIF4F and isoform EIF(iso)4F. Isoform EIF4F has subunits p220 and p26, whereas isoform EIF(iso)4F has subunits p82 and p28. In terms of processing, according to the redox status, the Cys-116-Cys-154 disulfide bridge may have a role in regulating protein function by affecting its ability to bind capped mRNA. Phosphorylated upon oxygen deprivation.

It localises to the nucleus. The protein localises to the cytoplasm. Its function is as follows. Component of the protein complex eIF4F, which is involved in the recognition of the mRNA cap, ATP-dependent unwinding of 5'-terminal secondary structure and recruitment of mRNA to the ribosome. Recognizes and binds the 7-methylguanosine-containing mRNA cap during an early step in the initiation of protein synthesis and facilitates ribosome binding by inducing the unwinding of the mRNAs secondary structures. In Zea mays (Maize), this protein is Eukaryotic translation initiation factor 4E-1.